The following is a 371-amino-acid chain: L-lysine 4-hydroxylase (371 aa).

Positions 174, 176, and 310 each coordinate Fe cation.

The protein belongs to the clavaminate synthase family. Requires Fe(2+) as cofactor.

It carries out the reaction L-lysine + 2-oxoglutarate + O2 = (4R)-4-hydroxy-L-lysine + succinate + CO2. Functionally, alpha-ketoglutarate-dependent dioxygenase that in vitro catalyzes the regio- and stereoselective hydroxylation of L-lysine, leading to (4R)-4-hydroxy-L-lysine. The sequence is that of L-lysine 4-hydroxylase from Niastella koreensis (strain DSM 17620 / KACC 11465 / NBRC 106392 / GR20-10).